A 163-amino-acid polypeptide reads, in one-letter code: uncharacterized protein (163 aa).

Residues 7-162 (ISISAVKLPQ…NVVYMRLEMS (156 aa)) enclose the N-acetyltransferase domain.

It belongs to the acetyltransferase family.

It localises to the cytoplasm. The protein resides in the nucleus. This is an uncharacterized protein from Schizosaccharomyces pombe (strain 972 / ATCC 24843) (Fission yeast).